The following is a 205-amino-acid chain: Small ribosomal subunit protein uS4 (205 aa).

The span at 1 to 12 (MSKRVQAKHKLD) shows a compositional bias: basic residues. The interval 1–49 (MSKRVQAKHKLDRRMGQNIWGRPKSPVNRREYGPGQHGQRRKGKMSDFG) is disordered. Residues 94 to 155 (RRLDAVVYRS…ASRQLEIVVV (62 aa)) enclose the S4 RNA-binding domain.

The protein belongs to the universal ribosomal protein uS4 family. As to quaternary structure, part of the 30S ribosomal subunit. Contacts protein S5. The interaction surface between S4 and S5 is involved in control of translational fidelity.

In terms of biological role, one of the primary rRNA binding proteins, it binds directly to 16S rRNA where it nucleates assembly of the body of the 30S subunit. Functionally, with S5 and S12 plays an important role in translational accuracy. The protein is Small ribosomal subunit protein uS4 of Methylorubrum extorquens (strain CM4 / NCIMB 13688) (Methylobacterium extorquens).